The following is an 82-amino-acid chain: UPF0213 protein SH2523 (82 aa).

The GIY-YIG domain maps to 2-77 (AKHYVYIVKC…KTFSRQQKLK (76 aa)).

This sequence belongs to the UPF0213 family.

This Staphylococcus haemolyticus (strain JCSC1435) protein is UPF0213 protein SH2523.